The chain runs to 438 residues: MSETHLSTQRFADLPLHPEVKQALAENGFEFCTPIQALSLPVLLQSKDIAGQAQTGTGKTMAFLVATFNHLLSTPVPEGRLINQPRAIIMAPTRELAIQIAKDAILLAKHTHLKVGIVYGGESYDVQRKVLDQGVDILIGTTGRIIDYVRQGIIGLNSIQAVVLDEADRMFDLGFIKDIRFLFRRMPEANQRLNMLFSATLSMKVQELAYDHMNEPVKVEIAPEEKTSKNIKEEIFYPSQEEKMRLLLTLIEEDWPEKAIVFSNTKHSCETLWSWLEGDGHRVGLLTGDVPQKKRIRILEQFTSGQLDILVATDVAARGLHISDVSHVYNYDLPDDCEDYVHRIGRTGRAGNKGMSISFACEEYALNLPAIESYINHSIPVSNYDSEALLADIPTPAKIHRKHPSGTRNLRDRSGASRPGAQRSGARPPRHDRTRRHS.

The short motif at Q9–A37 is the Q motif element. In terms of domain architecture, Helicase ATP-binding spans L40–V219. Residue A53–T60 participates in ATP binding. The DEAD box signature appears at D165–D168. In terms of domain architecture, Helicase C-terminal spans K243–L390. The segment at T395–S438 is disordered. The segment covering P428–S438 has biased composition (basic residues).

The protein belongs to the DEAD box helicase family. RhlB subfamily. Component of the RNA degradosome, which is a multiprotein complex involved in RNA processing and mRNA degradation.

The protein localises to the cytoplasm. The catalysed reaction is ATP + H2O = ADP + phosphate + H(+). Functionally, DEAD-box RNA helicase involved in RNA degradation. Has RNA-dependent ATPase activity and unwinds double-stranded RNA. The sequence is that of ATP-dependent RNA helicase RhlB from Shewanella baltica (strain OS185).